The sequence spans 75 residues: Putative sulfur carrier protein MJ0990 (75 aa).

Cysteine 15 serves as the catalytic Cysteine persulfide intermediate.

This sequence belongs to the sulfur carrier protein TusA family.

The chain is Putative sulfur carrier protein MJ0990 from Methanocaldococcus jannaschii (strain ATCC 43067 / DSM 2661 / JAL-1 / JCM 10045 / NBRC 100440) (Methanococcus jannaschii).